Reading from the N-terminus, the 435-residue chain is FAD-dependent monooxygenase ATEG_07662 (435 aa).

Residues 8 to 28 (PLDVAIIGGGIIGIMTALGLL) form a helical membrane-spanning segment. Residues E38, A51, and R119 each coordinate FAD. N191 carries N-linked (GlcNAc...) asparagine glycosylation. Residue R201 is part of the active site. The FAD site is built by D317 and A330.

The protein belongs to the paxM FAD-dependent monooxygenase family. It depends on FAD as a cofactor.

It localises to the membrane. It participates in secondary metabolite biosynthesis. Functionally, FAD-dependent monooxygenase; part of the cluster B that mediates the biosynthesis of azasperpyranones, members of the azaphilone family that exhibit anti-cancer activities. Azasperpyranones are synthesized by 2 clusters, A and B. Cluster A is responsible for the production of the polyhydric phenol moiety while the azaphilonoid scaffold is produced by the cluster B. The non-reducing polyketide synthase ATEG_03629 produces 5-methyl orsellinic acid, which is then reduced to 5-methyl orsellinic aldehyde by the NRPS-like protein ATEG_03630. 5-methyl orsellinic aldehyde is then first hydroxylated by the FAD-dependent monooxygenase ATEG_03635 and subsequently hydroxylated by the cytochrome P450 monooxygenase ATEG_03631 to produce the unstable polyhydric phenol precursor of azasperpyranones. On the other hand, the polyketide synthase ATEG_07659 is responsible for producing the 3,5-dimethyloctadienone moiety from acetyl-CoA, three malonyl-CoA, and two S-adenosyl methionines (SAM). The 3,5-dimethyloctadienone moiety is then loaded onto the SAT domain of ATEG_07661 and extended with four malonyl-CoA and one SAM, which leads to the formation of 2,4-dihydroxy-6-(5,7-dimethyl-2-oxo-trans-3-trans-5-nonadienyl)-3-methylbenzaldehyde (compound 8) after reductive release and aldol condensation. The FAD-dependent monooxygenase ATEG_07662 is the next enzyme in the biosynthesis sequence and hydroxylates the side chain at the benzylic position of compound 8. In Aspergillus nidulans, afoF, the ortholog of the FAD-dependent oxygenase ATEG_07660, is the key enzyme for the biosynthesis of asperfuranone by catalyzing the hydroxylation at C-8 of to prevent the formation of a six-membered ring hemiacetal intermediate and thus facilitating the formation of a five-membered ring to produce asperfuranone. In Aspergillus terreus, ATEG_07660 is probably not functional, which leads to the formation of the six-membered ring hemiacetal intermediate presperpyranone instead of asperfuranone. Finally, ATEG_03636 is involved in the condensation of the polyhydric phenol moiety produced by cluster A and the perasperpyranone precursor produced by cluster B, to yield azasperpyranone A. Further modifications of azasperpyranone A result in the production of derivatives, including azasperpyranone B to F. The chain is FAD-dependent monooxygenase ATEG_07662 from Aspergillus terreus (strain NIH 2624 / FGSC A1156).